The sequence spans 501 residues: Glycine betaine/proline/ectoine/pipecolic acid transporter OusA (501 aa).

Over 1–38 the chain is Cytoplasmic; sequence MKLKRKRVKPIALDDVTIIDDGRLRKAITAAALGNAME. The helical transmembrane segment at 39–59 threads the bilayer; the sequence is WFDFGVYGFVAYALGQVFFPG. Over 60-66 the chain is Periplasmic; the sequence is ADPGVQM. Residues 67-87 form a helical membrane-spanning segment; it reads IAALATFSVPFLIRPLGGVFF. The Cytoplasmic portion of the chain corresponds to 88 to 98; the sequence is GALGDKYGRQK. The chain crosses the membrane as a helical span at residues 99–119; it reads ILAITIIIMSISTFCIGLIPS. At 120–122 the chain is on the periplasmic side; it reads YER. The chain crosses the membrane as a helical span at residues 123–143; it reads IGIWAPILLLLAKMAQGFSVG. At 144–170 the chain is on the cytoplasmic side; the sequence is GEYTGASIFVAEYSPDRKRGFMGSWLD. A helical transmembrane segment spans residues 171–191; the sequence is FGSIAGFVLGAGVVVLISTLI. The Periplasmic segment spans residues 192–195; sequence GEQA. The helical transmembrane segment at 196-216 threads the bilayer; the sequence is FLAWGWRLPFFLALPLGLIGL. The Cytoplasmic segment spans residues 217 to 261; it reads YLRHALEETPAFRQHVEKLEQNDRDGLKAGPGVSFREIATHHWKS. A helical transmembrane segment spans residues 262 to 282; the sequence is LLVCIGLVIATNVTYYMLLTY. Topologically, residues 283 to 298 are periplasmic; the sequence is MPSYLSHSLHYSENHG. The chain crosses the membrane as a helical span at residues 299-319; that stretch reads VLIIIAIMIGMLFVQPVMGLL. Residues 320–326 lie on the Cytoplasmic side of the membrane; it reads SDRFGRK. The helical transmembrane segment at 327–347 threads the bilayer; sequence PFVVIGSVAMFFLAVPSFMLI. The Periplasmic segment spans residues 348 to 350; the sequence is NSD. Residues 351–371 form a helical membrane-spanning segment; it reads IIGLIFLGLLMLAVILNAFTG. The Cytoplasmic segment spans residues 372-391; that stretch reads VMASTLPALFPTHIRYSALA. The chain crosses the membrane as a helical span at residues 392–412; the sequence is SAFNISVLIAGLTPTVAAWLV. Residues 413-417 are Periplasmic-facing; it reads ESSQN. Residues 418-438 traverse the membrane as a helical segment; it reads LYMPAYYLMVIAVIGLLTGLF. At 439–501 the chain is on the cytoplasmic side; sequence MKETANKPLK…LVAQHPRIND (63 aa). The stretch at 461 to 495 forms a coiled coil; sequence KEILQEHHDNIEHKIEDITQQIAELEAKRQLLVAQ.

It belongs to the major facilitator superfamily. Sugar transporter (TC 2.A.1.1) family.

The protein localises to the cell inner membrane. In terms of biological role, involved in uptake and accumulation of various osmoprotectants. Allows the uptake of glycine betaine, proline, ectoine, and pipecolic acid. May be a contributory factor in the infection progression within the host. The polypeptide is Glycine betaine/proline/ectoine/pipecolic acid transporter OusA (Dickeya dadantii (strain 3937) (Erwinia chrysanthemi (strain 3937))).